A 56-amino-acid polypeptide reads, in one-letter code: Large ribosomal subunit protein bL33 (56 aa).

It belongs to the bacterial ribosomal protein bL33 family.

The protein is Large ribosomal subunit protein bL33 of Haemophilus influenzae (strain 86-028NP).